The primary structure comprises 255 residues: Aprataxin and PNK-like factor (255 aa).

The segment covering 1–11 has biased composition (low complexity); it reads MSATDASTADS. 3 disordered regions span residues 1-117, 131-168, and 195-255; these read MSAT…VSSS, RRNPAHRSAEAHPGDQDYRRPNFPAPPLGTPACPFGNA, and RLRQ…DDYD. 3 stretches are compositionally biased toward basic and acidic residues: residues 12-22, 40-64, and 137-150; these read GAKRKSSEDIT, KSEEPVASIKDETNPEVPMKIKAEP, and RSAEAHPGDQDYRR. 2 consecutive PBZ-type zinc fingers follow at residues 121 to 142 and 161 to 182; these read TSCRFGIRCYRRNPAHRSAEAH and PACPFGNACYRRNPVHFQDYSH. Residues 207 to 218 show a composition bias toward acidic residues; that stretch reads DDSGTDEEDEPF. Basic and acidic residues predominate over residues 221–230; it reads DNDRDADYRP. Residues 234-244 are compositionally biased toward acidic residues; sequence INEDEDDELEF.

Belongs to the APLF family.

Functionally, displays apurinic-apyrimidinic (AP) endonuclease and 3'-5' exonuclease activities in vitro. In Drosophila melanogaster (Fruit fly), this protein is Aprataxin and PNK-like factor.